We begin with the raw amino-acid sequence, 483 residues long: Probable glycosyltransferase 6 (483 aa).

Over 1–40 (MAASETAPFGVSAASKGGGGVAGARAQHGQLAVAGRVHDA) the chain is Cytoplasmic. Residues 41-61 (LVFAAGAVAAVLVLLATASFL) traverse the membrane as a helical; Signal-anchor for type II membrane protein segment. At 62 to 483 (SPMPVTNLVA…PLPFDYPAAR (422 aa)) the chain is on the lumenal side. N-linked (GlcNAc...) asparagine glycosylation is present at Asn-144.

This sequence belongs to the glycosyltransferase 34 family.

It is found in the golgi apparatus membrane. Probable glycosyltransferase that may be involved in the biosynthesis of xyloglucan. This is Probable glycosyltransferase 6 from Oryza sativa subsp. indica (Rice).